Consider the following 176-residue polypeptide: Cytochrome b (176 aa).

The next 3 helical transmembrane spans lie at 33-53 (FGSLLGVCLTMQIMTGLFLAM), 77-98 (WLLRYLHANGASMFFICLYLHI), and 113-133 (WNVGIILLFAVMATAFMGYVL). Heme b-binding residues include H83 and H97.

This sequence belongs to the cytochrome b family. The cytochrome bc1 complex contains 11 subunits: 3 respiratory subunits (MT-CYB, CYC1 and UQCRFS1), 2 core proteins (UQCRC1 and UQCRC2) and 6 low-molecular weight proteins (UQCRH/QCR6, UQCRB/QCR7, UQCRQ/QCR8, UQCR10/QCR9, UQCR11/QCR10 and a cleavage product of UQCRFS1). This cytochrome bc1 complex then forms a dimer. Heme b is required as a cofactor.

The protein resides in the mitochondrion inner membrane. In terms of biological role, component of the ubiquinol-cytochrome c reductase complex (complex III or cytochrome b-c1 complex) that is part of the mitochondrial respiratory chain. The b-c1 complex mediates electron transfer from ubiquinol to cytochrome c. Contributes to the generation of a proton gradient across the mitochondrial membrane that is then used for ATP synthesis. The sequence is that of Cytochrome b (MT-CYB) from Eumops perotis (Western bonneted bat).